The primary structure comprises 121 residues: Alpha-lactalbumin (121 aa).

Positions 1–121 constitute a C-type lysozyme domain; it reads IDYRKCQASQ…CLEDLDQWRC (121 aa). 4 disulfides stabilise this stretch: Cys-6–Cys-121, Cys-28–Cys-112, Cys-61–Cys-77, and Cys-73–Cys-91. N-linked (GlcNAc...) asparagine glycosylation is present at Asn-44. The Ca(2+) site is built by Lys-79, Asp-82, Asp-84, Asp-87, and Asp-88.

It belongs to the glycosyl hydrolase 22 family. As to quaternary structure, lactose synthase (LS) is a heterodimer of a catalytic component, beta1,4-galactosyltransferase (beta4Gal-T1) and a regulatory component, alpha-lactalbumin (LA). As to expression, mammary gland specific. Secreted in milk.

It localises to the secreted. Functionally, regulatory subunit of lactose synthase, changes the substrate specificity of galactosyltransferase in the mammary gland making glucose a good acceptor substrate for this enzyme. This enables LS to synthesize lactose, the major carbohydrate component of milk. In other tissues, galactosyltransferase transfers galactose onto the N-acetylglucosamine of the oligosaccharide chains in glycoproteins. This Notamacropus rufogriseus (Red-necked wallaby) protein is Alpha-lactalbumin (LALBA).